We begin with the raw amino-acid sequence, 287 residues long: Pyridoxal kinase PdxY (287 aa).

Substrate contacts are provided by residues serine 9 and 44–45; that span reads MQ. Positions 111, 142, 147, and 180 each coordinate ATP. Aspartate 221 provides a ligand contact to substrate.

Belongs to the pyridoxine kinase family. PdxY subfamily. As to quaternary structure, homodimer. Requires Mg(2+) as cofactor.

It carries out the reaction pyridoxal + ATP = pyridoxal 5'-phosphate + ADP + H(+). It functions in the pathway cofactor metabolism; pyridoxal 5'-phosphate salvage; pyridoxal 5'-phosphate from pyridoxal: step 1/1. Functionally, pyridoxal kinase involved in the salvage pathway of pyridoxal 5'-phosphate (PLP). Catalyzes the phosphorylation of pyridoxal to PLP. This chain is Pyridoxal kinase PdxY, found in Burkholderia thailandensis (strain ATCC 700388 / DSM 13276 / CCUG 48851 / CIP 106301 / E264).